The primary structure comprises 1550 residues: DNA excision repair protein ERCC-6-like 2 (1550 aa).

The tract at residues 1–23 is disordered; sequence MDPSAPQPRAETSGKDIWHPGER. Positions 12-22 are enriched in basic and acidic residues; it reads TSGKDIWHPGE. The 187-residue stretch at 135–321 folds into the Helicase ATP-binding domain; it reads YGHYIHGGGC…WCVMDWAVPG (187 aa). 148-155 is a binding site for ATP; sequence DDMGLGKT. Residues 272 to 275 carry the DEAH box motif; it reads DEAH. The Helicase C-terminal domain occupies 512 to 662; that stretch reads VLQQLLNHCR…CVVVGSENAK (151 aa). An Atypical PIP-box motif is present at residues 785–796; that stretch reads PGQLTLLQCGFS. Disordered stretches follow at residues 808 to 848, 914 to 1002, and 1354 to 1410; these read DSDG…TSKH, FPDN…SSLR, and AETK…TRTG. Composition is skewed to basic and acidic residues over residues 830 to 840 and 933 to 953; these read EAKDAGCEKNQ and TEHT…DKRN. Phosphoserine occurs at positions 980 and 983. Residues 992-1002 show a composition bias toward basic residues; the sequence is SRVRKRASSLR. Polar residues predominate over residues 1359 to 1388; that stretch reads SPVSSTQEIDSGKNSQASEDTVTSRSLNSE. A phosphoserine mark is found at S1373 and S1376. A compositionally biased stretch (basic and acidic residues) spans 1389-1405; it reads SETRERRLENTMKDQQD.

This sequence belongs to the SNF2/RAD54 helicase family. As to quaternary structure, interacts with NEK6. Interacts (via an atypical PIP-box) with PCNA; this interaction facilitates cenrtomeric localization of ERCC6L2. Interacts with CYREN; this interaction is DNA independent. Interacts with XRCC6 and XRCC5. Post-translationally, phosphorylated by NEK6. As to expression, expressed in bone marrow (at protein level).

The protein localises to the nucleus. It localises to the cytoplasm. It is found in the cytoskeleton. Its subcellular location is the microtubule organizing center. The protein resides in the centrosome. The protein localises to the mitochondrion. It localises to the chromosome. It is found in the centromere. Promotes double-strand break (DSB) end-joining and facilitates programmed recombination by controlling how DNA ends are joined in a spatially oriented manner during repair. Also plays a role in DNA repair by restricting DNA end resection in double strand break (DSB) repair. Facilitates replication of complex DNA regions and regulates the maintenance of chromatin structure. This is DNA excision repair protein ERCC-6-like 2 from Homo sapiens (Human).